The primary structure comprises 1030 residues: Alpha-L-rhamnosidase (1030 aa).

Positions 133-297 (PSLEGSSWIW…GAGPWGRVAP (165 aa)) are carbohydrate-binding module-67 (CBM67). 2 residues coordinate Ca(2+): aspartate 179 and asparagine 180. Alpha-L-rhamnose is bound by residues 179 to 180 (DN) and tryptophan 203. Ca(2+)-binding residues include asparagine 228 and proline 233. Residues aspartate 630, 634–636 (RDE), aspartate 643, and tryptophan 695 contribute to the alpha-L-rhamnose site. Glutamate 636 acts as the Proton donor in catalysis. The active-site Proton acceptor is the glutamate 895. Histidine 916 lines the alpha-L-rhamnose pocket.

Belongs to the glycosyl hydrolase 78 family.

It catalyses the reaction Hydrolysis of terminal non-reducing alpha-L-rhamnose residues in alpha-L-rhamnosides.. In terms of biological role, alpha-L-rhamnosidase which is able to degrade p-nitrophenyl-alpha-L-rhamnopyranoside (PNP-Rha) in vitro. Releases L-rhamnose from citrus flavonoids such as naringin, rutin and hesperidin, and the arabinogalactan-protein (AGP) gum arabic. AGPs are a family of proteoglycans that are localized on the cell surfaces of higher plants. Cleaves both the alpha-1,6 and the alpha-1,2-linked rhamnosyl residues. This Streptomyces avermitilis (strain ATCC 31267 / DSM 46492 / JCM 5070 / NBRC 14893 / NCIMB 12804 / NRRL 8165 / MA-4680) protein is Alpha-L-rhamnosidase.